We begin with the raw amino-acid sequence, 325 residues long: Ribosomal RNA small subunit methyltransferase H (325 aa).

Residues 42-44 (GGH), D62, F86, D105, and Q112 each bind S-adenosyl-L-methionine.

Belongs to the methyltransferase superfamily. RsmH family.

It is found in the cytoplasm. It catalyses the reaction cytidine(1402) in 16S rRNA + S-adenosyl-L-methionine = N(4)-methylcytidine(1402) in 16S rRNA + S-adenosyl-L-homocysteine + H(+). Specifically methylates the N4 position of cytidine in position 1402 (C1402) of 16S rRNA. The polypeptide is Ribosomal RNA small subunit methyltransferase H (Cupriavidus metallidurans (strain ATCC 43123 / DSM 2839 / NBRC 102507 / CH34) (Ralstonia metallidurans)).